The following is an 82-amino-acid chain: Putative membrane protein insertion efficiency factor (82 aa).

Residues 63 to 82 (GGFDPVPLKKDKNSKTTHHH) are disordered.

Belongs to the UPF0161 family.

It localises to the cell membrane. Functionally, could be involved in insertion of integral membrane proteins into the membrane. This Staphylococcus epidermidis (strain ATCC 35984 / DSM 28319 / BCRC 17069 / CCUG 31568 / BM 3577 / RP62A) protein is Putative membrane protein insertion efficiency factor.